We begin with the raw amino-acid sequence, 176 residues long: Protein MAL2 (176 aa).

Topologically, residues Met-1 to Thr-34 are cytoplasmic. Positions Ile-31–Arg-175 constitute an MARVEL domain. The chain crosses the membrane as a helical span at residues Tyr-35–Ala-55. At Ser-56–Gly-66 the chain is on the lumenal side. A helical membrane pass occupies residues Trp-67–Leu-87. Topologically, residues Ser-88–Asp-102 are cytoplasmic. The chain crosses the membrane as a helical span at residues Phe-103–Thr-123. At Thr-124–Asn-149 the chain is on the lumenal side. A glycan (N-linked (GlcNAc...) asparagine) is linked at Asn-132. The helical transmembrane segment at Val-150–Ala-170 threads the bilayer. The Cytoplasmic portion of the chain corresponds to Leu-171–Pro-176.

This sequence belongs to the MAL family. As to quaternary structure, interacts with TPD52L2.

It localises to the cell membrane. It is found in the apical cell membrane. Its function is as follows. Member of the machinery of polarized transport. Required for the indirect transcytotic route at the step of the egress of the transcytosing cargo from perinuclear endosomes in order for it to travel to the apical surface via a raft-dependent pathway. This chain is Protein MAL2 (MAL2), found in Bos taurus (Bovine).